Consider the following 232-residue polypeptide: Protein lin-7 homolog A (232 aa).

Positions 14-28 (MATLTVVQPLTLDRD) match the Kinase interacting site motif. The 56-residue stretch at 25-80 (LDRDVARAIELLEKLQESGEVPVHKLQSLKKVLQSEFCTAIREVYQYMHETITVNG) folds into the L27 domain. The PDZ domain occupies 108–190 (VVELPKTDEG…SVKLVVRYTP (83 aa)).

It belongs to the lin-7 family. As to quaternary structure, forms a complex with CASK and CASKIN1. Component of the brain-specific heterotrimeric complex (LIN-10-LIN-2-LIN-7 complex) composed of at least APBA1, CASK, and LIN7, which associates with the motor protein KIF17 to transport vesicles along microtubules. Can also interact with other modular proteins containing protein-protein interaction domains like PALS1, PALS2, MPP7, DLG1, DLG2 and DLG3 through its L27 domain. Interacts with DLG4 and GRIN2B as well as CDH1 and CTNNB1, the channels KCNJ12/Kir2.2, KCNJ4/Kir2.3 and probably KCNJ2/Kir2.1 and SLC6A12/BGT-1 via its PDZ domain. The association of LIN7A with cadherin and beta-catenin is calcium-dependent, occurs at synaptic junctions and requires the actin cytoskeleton. Interacts with EGFR, ERBB2, ERBB3 and ERBB4 with both PDZ and KID domains. Associates with KIF17 via APBA1. Interacts with HTR4. Forms a tripartite complex composed of DLG1, MPP7 and LIN7 (LIN7A or LIN7C). Interacts with MARCHF11. Ubiquitously expressed in brain and detected in lung, liver and testis (at protein level). Expression was detected only in brain.

It is found in the cell membrane. It localises to the basolateral cell membrane. The protein resides in the cell junction. The protein localises to the postsynaptic density membrane. Its subcellular location is the tight junction. Its function is as follows. Plays a role in establishing and maintaining the asymmetric distribution of channels and receptors at the plasma membrane of polarized cells. Forms membrane-associated multiprotein complexes that may regulate delivery and recycling of proteins to the correct membrane domains. The tripartite complex composed of LIN7 (LIN7A, LIN7B or LIN7C), CASK and APBA1 associates with the motor protein KIF17 to transport vesicles containing N-methyl-D-aspartate (NMDA) receptor subunit NR2B along microtubules. This complex may have the potential to couple synaptic vesicle exocytosis to cell adhesion in brain. Ensures the proper localization of GRIN2B (subunit 2B of the NMDA receptor) to neuronal postsynaptic density and may function in localizing synaptic vesicles at synapses where it is recruited by beta-catenin and cadherin. Required to localize Kir2 channels, GABA transporter (SLC6A12) and EGFR/ERBB1, ERBB2, ERBB3 and ERBB4 to the basolateral membrane of epithelial cells. This is Protein lin-7 homolog A (Lin7a) from Rattus norvegicus (Rat).